Consider the following 90-residue polypeptide: Putative septation protein SpoVG (90 aa).

The protein belongs to the SpoVG family.

Its function is as follows. Could be involved in septation. In Clostridium perfringens (strain SM101 / Type A), this protein is Putative septation protein SpoVG.